The primary structure comprises 393 residues: tRNA-specific 2-thiouridylase MnmA (393 aa).

ATP contacts are provided by residues 19–26 (AMSGGVDS) and leucine 45. Cysteine 113 functions as the Nucleophile in the catalytic mechanism. A disulfide bridge connects residues cysteine 113 and cysteine 210. Residue glycine 137 coordinates ATP. The segment at 160–162 (RDQ) is interaction with tRNA. Cysteine 210 acts as the Cysteine persulfide intermediate in catalysis.

It belongs to the MnmA/TRMU family.

Its subcellular location is the cytoplasm. It catalyses the reaction S-sulfanyl-L-cysteinyl-[protein] + uridine(34) in tRNA + AH2 + ATP = 2-thiouridine(34) in tRNA + L-cysteinyl-[protein] + A + AMP + diphosphate + H(+). In terms of biological role, catalyzes the 2-thiolation of uridine at the wobble position (U34) of tRNA, leading to the formation of s(2)U34. This is tRNA-specific 2-thiouridylase MnmA from Bradyrhizobium diazoefficiens (strain JCM 10833 / BCRC 13528 / IAM 13628 / NBRC 14792 / USDA 110).